The following is a 487-amino-acid chain: Beta-barrel assembly-enhancing protease (487 aa).

Positions 1–27 are cleaved as a signal peptide; the sequence is MFRQLKKNLVATLIAALALGQVAPAFA. H136 serves as a coordination point for Zn(2+). E137 is a catalytic residue. Zn(2+) contacts are provided by H140 and E201. D205 functions as the Proton donor in the catalytic mechanism. TPR repeat units lie at residues 309-342 and 427-460; these read HAAQ…EPNN and DQEL…AKLG.

The protein belongs to the peptidase M48 family. BepA subfamily. It depends on Zn(2+) as a cofactor.

The protein resides in the periplasm. Functionally, functions both as a chaperone and a metalloprotease. Maintains the integrity of the outer membrane by promoting either the assembly or the elimination of outer membrane proteins, depending on their folding state. The polypeptide is Beta-barrel assembly-enhancing protease (Salmonella typhi).